A 91-amino-acid chain; its full sequence is Teretoxin Tan6.2 (91 aa).

The signal sequence occupies residues 1–21 (MATSGRLLCVCLVLGLVFGSL). Positions 22–50 (GYPVMEKKRAGKNFDLGTIANWAWQIGEK) are excised as a propeptide.

This sequence belongs to the teretoxin M (TM) superfamily. In terms of processing, contains 3 disulfide bonds. In terms of tissue distribution, expressed by the venom duct.

Its subcellular location is the secreted. The sequence is that of Teretoxin Tan6.2 from Terebra anilis (Auger snail).